We begin with the raw amino-acid sequence, 105 residues long: Nucleoid-associated protein RPC_4847 (105 aa).

This sequence belongs to the YbaB/EbfC family. As to quaternary structure, homodimer.

It localises to the cytoplasm. Its subcellular location is the nucleoid. Its function is as follows. Binds to DNA and alters its conformation. May be involved in regulation of gene expression, nucleoid organization and DNA protection. This chain is Nucleoid-associated protein RPC_4847, found in Rhodopseudomonas palustris (strain BisB18).